Consider the following 450-residue polypeptide: UDP-N-acetylmuramoylalanine--D-glutamate ligase (450 aa).

An ATP-binding site is contributed by 119–125 (GSNGKTT).

It belongs to the MurCDEF family.

The protein localises to the cytoplasm. The catalysed reaction is UDP-N-acetyl-alpha-D-muramoyl-L-alanine + D-glutamate + ATP = UDP-N-acetyl-alpha-D-muramoyl-L-alanyl-D-glutamate + ADP + phosphate + H(+). The protein operates within cell wall biogenesis; peptidoglycan biosynthesis. Cell wall formation. Catalyzes the addition of glutamate to the nucleotide precursor UDP-N-acetylmuramoyl-L-alanine (UMA). This Streptococcus pneumoniae (strain Taiwan19F-14) protein is UDP-N-acetylmuramoylalanine--D-glutamate ligase.